The sequence spans 353 residues: Stearoyl-CoA desaturase 4 (353 aa).

Residues 1–42 are disordered; it reads MTAHLPQEISSRCSTTNIMEPHSRRQQDGEEKMPLQAEDIRP. Topologically, residues 1–66 are cytoplasmic; that stretch reads MTAHLPQEIS…EGPPPKLEYV (66 aa). The span at 8 to 18 shows a compositional bias: polar residues; the sequence is EISSRCSTTNI. Positions 21-42 are enriched in basic and acidic residues; that stretch reads PHSRRQQDGEEKMPLQAEDIRP. Residues 67-87 traverse the membrane as a helical segment; that stretch reads WRNIIFMALLHVGALYGITLV. N69 contributes to the substrate binding site. Residues 88–91 lie on the Lumenal side of the membrane; that stretch reads PSCK. A helical transmembrane segment spans residues 92–112; the sequence is VYTWLLGVFYNVVAGLGITAG. Over 113–211 the chain is Cytoplasmic; the sequence is AHRLWSHRTY…EKLVMFQRRY (99 aa). The Fe cation site is built by H114 and H119. Positions 114 to 119 match the Histidine box-1 motif; it reads HRLWSH. N142, R149, and D150 together coordinate substrate. 3 residues coordinate Fe cation: H151, H154, and H155. Residues 151-155 carry the Histidine box-2 motif; that stretch reads HRAHH. R182 and K183 together coordinate substrate. The chain crosses the membrane as a helical span at residues 212–231; the sequence is YKLAVTLMFIILPTLVPWYL. Residues 232-235 are Lumenal-facing; it reads WGET. The chain crosses the membrane as a helical span at residues 236 to 257; that stretch reads FQHSLCVSNFLRYAVLLNFTWL. Residue W256 participates in substrate binding. The Cytoplasmic segment spans residues 258-353; it reads VNSAAHLYGY…RTGDGSHKSS (96 aa). Fe cation-binding residues include H263, H292, H295, and H296. A Histidine box-3 motif is present at residues 292-296; that stretch reads HNYHH.

This sequence belongs to the fatty acid desaturase type 1 family. Requires Fe(2+) as cofactor. As to expression, detected in heart, but not in brain, liver, skin or adipose tissue.

Its subcellular location is the endoplasmic reticulum membrane. It is found in the microsome membrane. The enzyme catalyses octadecanoyl-CoA + 2 Fe(II)-[cytochrome b5] + O2 + 2 H(+) = (9Z)-octadecenoyl-CoA + 2 Fe(III)-[cytochrome b5] + 2 H2O. It catalyses the reaction hexadecanoyl-CoA + 2 Fe(II)-[cytochrome b5] + O2 + 2 H(+) = (9Z)-hexadecenoyl-CoA + 2 Fe(III)-[cytochrome b5] + 2 H2O. In terms of biological role, stearoyl-CoA desaturase that utilizes O(2) and electrons from reduced cytochrome b5 to introduce the first double bond into saturated fatty acyl-CoA substrates. Catalyzes the insertion of a cis double bond at the delta-9 position into fatty acyl-CoA substrates including palmitoyl-CoA and stearoyl-CoA. Required for the biosynthesis of membrane phospholipids, cholesterol esters and triglycerides. The sequence is that of Stearoyl-CoA desaturase 4 from Mus musculus (Mouse).